Reading from the N-terminus, the 174-residue chain is Large ribosomal subunit protein uL5 (174 aa).

The protein belongs to the universal ribosomal protein uL5 family. As to quaternary structure, part of the 50S ribosomal subunit; contacts the 5S rRNA and probably tRNA. Forms a bridge to the 30S subunit in the 70S ribosome.

Its function is as follows. This is one of the proteins that bind and probably mediate the attachment of the 5S RNA into the large ribosomal subunit, where it forms part of the central protuberance. In the 70S ribosome it contacts protein S13 of the 30S subunit (bridge B1b), connecting the 2 subunits; this bridge is implicated in subunit movement. May contact the P site tRNA; the 5S rRNA and some of its associated proteins might help stabilize positioning of ribosome-bound tRNAs. This is Large ribosomal subunit protein uL5 from Halorubrum lacusprofundi (strain ATCC 49239 / DSM 5036 / JCM 8891 / ACAM 34).